The sequence spans 157 residues: Parasitophorous vacuole membrane protein S16 (157 aa).

A signal peptide spans 1–25; it reads MNIRKFIPSLALMLIFFAFANLVLS. The Extracellular portion of the chain corresponds to 26–105; sequence DANDKAKKPA…DKKTTVNRNL (80 aa). The tract at residues 30–74 is disordered; that stretch reads KAKKPAGKGSPSTLQTPGSSSGASLHAVGPNQGGLSQGLSGKDSA. Over residues 39–52 the composition is skewed to polar residues; the sequence is SPSTLQTPGSSSGA. The chain crosses the membrane as a helical span at residues 106-126; sequence IISTAVTNMIMLIILSGIVGF. Topologically, residues 127–157 are cytoplasmic; it reads KVKKTKNADDDKGDKDKDKDNTDEGDEGDDS. Residues 130 to 157 form a disordered region; that stretch reads KTKNADDDKGDKDKDKDNTDEGDEGDDS. Residues 132-148 show a composition bias toward basic and acidic residues; the sequence is KNADDDKGDKDKDKDNT.

The protein localises to the parasitophorous vacuole membrane. It localises to the vacuole. In terms of biological role, involved in male gametogenesis. Required for exflagellation of male gametocytes. May play a role in parasite transmission in the mosquito. Binds to the mosquito vector midgut. The protein is Parasitophorous vacuole membrane protein S16 of Plasmodium falciparum (isolate 3D7).